A 158-amino-acid chain; its full sequence is Ribonuclease H (158 aa).

Residues E3–E144 enclose the RNase H type-1 domain. 4 residues coordinate Mg(2+): D12, E50, D72, and D136.

Belongs to the RNase H family. In terms of assembly, monomer. The cofactor is Mg(2+).

It is found in the cytoplasm. The catalysed reaction is Endonucleolytic cleavage to 5'-phosphomonoester.. Its function is as follows. Endonuclease that specifically degrades the RNA of RNA-DNA hybrids. The sequence is that of Ribonuclease H from Shewanella sp. (strain MR-7).